Here is a 51-residue protein sequence, read N- to C-terminus: Large ribosomal subunit protein bL33 (51 aa).

Belongs to the bacterial ribosomal protein bL33 family.

The protein is Large ribosomal subunit protein bL33 of Methylococcus capsulatus (strain ATCC 33009 / NCIMB 11132 / Bath).